A 221-amino-acid polypeptide reads, in one-letter code: MTERKQGAAAPRPLNRPQGESPKATKLPATLLYADPLPDDLVEVGYVGAAYGIRGWIKVEPHANDASALLHARRWWLLTPPQAGLVATAEASRAQAVCVRVAQSREHSGTVVAQATGVSDRNLAEALKGRRVWIRRADFPAPEENEFYWVDLIGCAVSNEQGELLGEVSGLIDNGAHQILQVAYALPDGKAGERLVPFVDAFLRTVDTAGKRIVVDWGLDY.

The segment at 1-23 is disordered; it reads MTERKQGAAAPRPLNRPQGESPK. The PRC barrel domain maps to 144-221; sequence ENEFYWVDLI…RIVVDWGLDY (78 aa).

Belongs to the RimM family. As to quaternary structure, binds ribosomal protein uS19.

It is found in the cytoplasm. Functionally, an accessory protein needed during the final step in the assembly of 30S ribosomal subunit, possibly for assembly of the head region. Essential for efficient processing of 16S rRNA. May be needed both before and after RbfA during the maturation of 16S rRNA. It has affinity for free ribosomal 30S subunits but not for 70S ribosomes. The protein is Ribosome maturation factor RimM of Cupriavidus pinatubonensis (strain JMP 134 / LMG 1197) (Cupriavidus necator (strain JMP 134)).